The sequence spans 366 residues: Galactoside alpha-(1,2)-fucosyltransferase 1 (366 aa).

Topologically, residues 1-8 (MWPRSHRH) are cytoplasmic. A helical; Signal-anchor for type II membrane protein transmembrane segment spans residues 9–25 (LCLAFLLVCVLSAISFL). Residues 26–366 (IHFHQDSIRH…LSPLWPLAEP (341 aa)) are Lumenal-facing. Asn-66, Asn-302, and Asn-328 each carry an N-linked (GlcNAc...) asparagine glycan.

It belongs to the glycosyltransferase 11 family.

It is found in the golgi apparatus. It localises to the golgi stack membrane. The catalysed reaction is a beta-D-galactosyl-(1-&gt;4)-N-acetyl-beta-D-glucosaminyl derivative + GDP-beta-L-fucose = an alpha-L-Fuc-(1-&gt;2)-beta-D-Gal-(1-&gt;4)-beta-D-GlcNAc derivative + GDP + H(+). The enzyme catalyses a ganglioside GA1 + GDP-beta-L-fucose = a ganglioside Fuc-GA1 + GDP + H(+). It catalyses the reaction a beta-D-Gal-(1-&gt;3)-beta-D-GlcNAc-(1-&gt;3)-beta-D-Gal-(1-&gt;4)-beta-D-Glc-(1&lt;-&gt;1')-Cer(d18:1(4E)) + GDP-beta-L-fucose = alpha-L-fucosyl-(1-&gt;2)- beta-D-galactosyl-(1-&gt;3)-N-acetyl-beta-D-glucosaminyl-(1-&gt;3)-beta-D-galactosyl-(1-&gt;4)-beta-D-glucosyl-(1&lt;-&gt;1')-N-acylsphing-4-enine + GDP + H(+). It carries out the reaction a neolactoside nLc4Cer(d18:1(4E)) + GDP-beta-L-fucose = a neolactoside IV(2)-alpha-Fuc-nLc4Cer(d18:1(4E)) + GDP + H(+). The catalysed reaction is a ganglioside GM1 + GDP-beta-L-fucose = a ganglioside Fuc-GM1 + GDP + H(+). The enzyme catalyses beta-D-galactosyl-(1-&gt;3)-N-acetyl-D-galactosamine + GDP-beta-L-fucose = alpha-L-fucosyl-(1-&gt;2)-beta-D-galactosyl-(1-&gt;3)-N-acetyl-D-galactosamine + GDP + H(+). The protein operates within protein modification; protein glycosylation. Its function is as follows. Catalyzes the transfer of L-fucose, from a guanosine diphosphate-beta-L-fucose, to the terminal galactose residue of glycoconjugates through an alpha(1,2) linkage leading to H antigen synthesis that is an intermediate substrate in the synthesis of ABO blood group antigens. H antigen is essential for maturation of the glomerular layer of the main olfactory bulb, in cell migration and early cell-cell contacts during tumor associated angiogenesis. Preferentially fucosylates soluble lactose and to a lesser extent fucosylates glycolipids gangliosides GA1 and GM1a. This chain is Galactoside alpha-(1,2)-fucosyltransferase 1, found in Saimiri boliviensis boliviensis (Bolivian squirrel monkey).